The chain runs to 381 residues: MKENELKNEKSVDVLSVKQLESQKTVLPQDLFRSSFTWFCYEIYKSLVFRIWMLLWLPLSVWWKLSNNWIYPLMVSLLVLFWGPVFVLVIFRLSRKRSLSKQLTQFCKEITKNTPSSDPHDWEVVAANLNSYFYENKAWNTKYFFFSAMSCQEAFRTTLLEPFSLKKDEAAKVKSFKDSVPYIEEALEVYFTEVEKQWKLFNSEKSWSPVGLEDAKLPKEAYRFKLTWVLKRIFNRRCLPLFLFYLHNVFISRNDGTIARPLFLVVLFFIMTRDFRNMRMIVLSVKMEHKMQFLSTIINEQESGANGWDEIAKKMNRYLFEKKVWKNEEFFFDGIDCEWFFSHFFYRVLSAKKSMRALSLNVELWPYIKEAQLSCSEESLA.

Residues 1–42 (MKENELKNEKSVDVLSVKQLESQKTVLPQDLFRSSFTWFCYE) are Cytoplasmic-facing. The helical transmembrane segment at 43–63 (IYKSLVFRIWMLLWLPLSVWW) threads the bilayer. Over 64-69 (KLSNNW) the chain is Extracellular. A helical transmembrane segment spans residues 70–90 (IYPLMVSLLVLFWGPVFVLVI). Topologically, residues 91-381 (FRLSRKRSLS…QLSCSEESLA (291 aa)) are cytoplasmic.

The protein belongs to the DUP/COS family.

It is found in the membrane. The polypeptide is Protein COS6 (COS6) (Saccharomyces cerevisiae (strain ATCC 204508 / S288c) (Baker's yeast)).